A 389-amino-acid chain; its full sequence is Chalcone synthase (389 aa).

C164 is an active-site residue.

The protein belongs to the thiolase-like superfamily. Chalcone/stilbene synthases family.

It carries out the reaction (E)-4-coumaroyl-CoA + 3 malonyl-CoA + 3 H(+) = 2',4,4',6'-tetrahydroxychalcone + 3 CO2 + 4 CoA. It functions in the pathway secondary metabolite biosynthesis; flavonoid biosynthesis. Functionally, the primary product of this enzyme is 4,2',4',6'-tetrahydroxychalcone (also termed naringenin-chalcone or chalcone) which can under specific conditions spontaneously isomerize into naringenin. This is Chalcone synthase (CHS) from Hydrangea macrophylla (Bigleaf hydrangea).